The following is a 359-amino-acid chain: UPF0496 protein At3g57100 (359 aa).

The stretch at 179–208 forms a coiled coil; it reads HEELAKMVVKLEKTMKDIDKKLRRVRGRRA. Residues 214 to 234 traverse the membrane as a helical segment; the sequence is LLAPVIAVIFLSKLVAGLVPI.

This sequence belongs to the UPF0496 family.

It localises to the membrane. In Arabidopsis thaliana (Mouse-ear cress), this protein is UPF0496 protein At3g57100.